The chain runs to 256 residues: tRNA pseudouridine synthase A (256 aa).

Catalysis depends on aspartate 52, which acts as the Nucleophile. Tyrosine 110 lines the substrate pocket.

Belongs to the tRNA pseudouridine synthase TruA family. Homodimer.

The enzyme catalyses uridine(38/39/40) in tRNA = pseudouridine(38/39/40) in tRNA. Formation of pseudouridine at positions 38, 39 and 40 in the anticodon stem and loop of transfer RNAs. The sequence is that of tRNA pseudouridine synthase A from Stenotrophomonas maltophilia (strain K279a).